The chain runs to 393 residues: Triacylglycerol lipase 1 (393 aa).

Residues 1–20 form the signal peptide; sequence MKWLLVAVLTSLTIFSALTQ. Residue Asn41 is glycosylated (N-linked (GlcNAc...) asparagine). Ser166 acts as the Nucleophile in catalysis. N-linked (GlcNAc...) asparagine glycosylation is present at Asn261. Catalysis depends on charge relay system residues Asp334 and His363.

The protein belongs to the AB hydrolase superfamily. Lipase family. Expressed in seedlings, roots, leaves, flowers and siliques. Specifically expressed in the epidermis.

The protein localises to the secreted. It carries out the reaction a triacylglycerol + H2O = a diacylglycerol + a fatty acid + H(+). It catalyses the reaction 1,2,3-tributanoylglycerol + H2O = dibutanoylglycerol + butanoate + H(+). The enzyme catalyses 1,2,3-trioctanoylglycerol + H2O = dioctanoylglycerol + octanoate + H(+). Its pathway is lipid metabolism; glycerolipid metabolism. Triacylglycerol (TAG) lipase active on triolein, trioctanoin, tributyrin and 1,3-Diolein, but not on phospho- and galactolipids. Involved but dispensable for TAG storage breakdown during seed germination. This chain is Triacylglycerol lipase 1, found in Arabidopsis thaliana (Mouse-ear cress).